Reading from the N-terminus, the 386-residue chain is Probable copper-dependent oxygenase M1 (386 aa).

Positions 1-22 (MLRMKKICTAFLTIALCTHVLA) are cleaved as a signal peptide. Asparagine 86 carries N-linked (GlcNAc...) asparagine glycosylation. A helical membrane pass occupies residues 334 to 354 (FVVPIAAIAFIALTIGAGYVF).

This sequence belongs to the clz3 oxygenase family.

It localises to the membrane. Its pathway is secondary metabolite biosynthesis. Its function is as follows. Probable copper-dependent oxygenase; part of the gene cluster that mediates the biosynthesis of squalestatin S1 (SQS1, also known as zaragozic acid A), a heavily oxidized fungal polyketide that offers potent cholesterol lowering activity by targeting squalene synthase (SS). SQS1 is composed of a 2,8-dioxobicyclic[3.2.1]octane-3,4,5-tricarboxyclic acid core that is connected to two lipophilic polyketide arms. These initial steps feature the priming of an unusual benzoic acid starter unit onto the highly reducing polyketide synthase pks2, followed by oxaloacetate extension and product release to generate a tricarboxylic acid containing product. The phenylalanine ammonia lyase (PAL) M7 and the acyl-CoA ligase M9 are involved in transforming phenylalanine into benzoyl-CoA. The citrate synthase-like protein R3 is involved in connecting the C-alpha-carbons of the hexaketide chain and oxaloacetate to afford the tricarboxylic acid unit. The potential hydrolytic enzymes, M8 and M10, are in close proximity to pks2 and may participate in product release. On the other side, the tetraketide arm is synthesized by a the squalestatin tetraketide synthase pks1 and enzymatically esterified to the core in the last biosynthetic step, by the acetyltransferase M4. The biosynthesis of the tetraketide must involve 3 rounds of chain extension. After the first and second rounds methyl-transfer occurs, and in all rounds of extension the ketoreductase and dehydratase are active. The enoyl reductase and C-MeT of pks1 are not active in the final round of extension. The acetyltransferase M4 appears to have a broad substrate selectivity for its acyl CoA substrate, allowing the in vitro synthesis of novel squalestatins. The biosynthesis of SQS1 requires several oxidative steps likely performed by oxidoreductases M1, R1 and R2. Finally, in support of the identification of the cluster as being responsible for SQS1 production, the cluster contains a gene encoding a putative squalene synthase (SS) R6, suggesting a likely mechanism for self-resistance. This Phoma sp. (strain ATCC 20986 / MF5453) protein is Probable copper-dependent oxygenase M1.